A 678-amino-acid polypeptide reads, in one-letter code: Glycine--tRNA ligase beta subunit (678 aa).

Belongs to the class-II aminoacyl-tRNA synthetase family. As to quaternary structure, tetramer of two alpha and two beta subunits.

The protein localises to the cytoplasm. The catalysed reaction is tRNA(Gly) + glycine + ATP = glycyl-tRNA(Gly) + AMP + diphosphate. The chain is Glycine--tRNA ligase beta subunit from Streptococcus pneumoniae (strain P1031).